The following is a 646-amino-acid chain: Serine/threonine-protein kinase max-2 (646 aa).

Residues Phe19–Asp40 form a disordered region. The segment covering Ser22–Lys33 has biased composition (basic and acidic residues). The 14-residue stretch at Ile41 to Gly54 folds into the CRIB domain. Residues Leu136–Arg345 form a disordered region. Composition is skewed to low complexity over residues Ser142–Ala157 and Leu167–Ser180. A compositionally biased stretch (polar residues) spans Ser196 to Gly205. Over residues Ser214–Leu223 the composition is skewed to pro residues. Over residues Thr229–Gly245 the composition is skewed to low complexity. Residues Ala246–Pro262 show a composition bias toward pro residues. Composition is skewed to low complexity over residues Ser273–Val307 and Lys323–Val334. The region spanning Tyr376–Leu627 is the Protein kinase domain. ATP is bound by residues Ile382 to Val390 and Lys405. The active-site Proton acceptor is the Asp496.

This sequence belongs to the protein kinase superfamily. STE Ser/Thr protein kinase family. STE20 subfamily. Interacts with mlk-1; the interaction is independent of max-2 and mlk-1 kinase activities. Interacts with mig-2 (GTP-bound form). Mg(2+) serves as cofactor.

It is found in the perikaryon. The protein localises to the cell projection. It localises to the dendrite. Its subcellular location is the cytoplasm. It carries out the reaction L-seryl-[protein] + ATP = O-phospho-L-seryl-[protein] + ADP + H(+). The enzyme catalyses L-threonyl-[protein] + ATP = O-phospho-L-threonyl-[protein] + ADP + H(+). Functionally, serine/threonine-protein kinase, which phosphorylates mlk-1. Involved in the stress response to heavy metals by activating the mlk-1/mek-1/kgb-1 pathway. In ventral cord commissural motoneurons, required for dorsal axon guidance downstream of unc-6/netrin repulsion receptor unc-5 and probably of Rho GTPases ced-10 and mig-2. Plays a redundant role with mig-10 in orientating axonal growth of HSN neurons. Plays a redundant role with pak-1 in P neuroblast migration and in distal tip cell (DTC)-mediated guidance of gonad elongation probably downstream of Rho GTPases. In association with pak-2, plays a role in embryogenesis. In association with pak-1, may be involved in spermatogenesis. This Caenorhabditis elegans protein is Serine/threonine-protein kinase max-2.